Here is a 477-residue protein sequence, read N- to C-terminus: Ketoisovalerate oxidoreductase subunit VorA (477 aa).

As to quaternary structure, heterotrimer of the VorA, VorB and VorC subunits.

The enzyme catalyses 3-methyl-2-oxobutanoate + 2 oxidized [2Fe-2S]-[ferredoxin] + CoA = 2-methylpropanoyl-CoA + 2 reduced [2Fe-2S]-[ferredoxin] + CO2 + H(+). The chain is Ketoisovalerate oxidoreductase subunit VorA (vorA) from Methanothermobacter thermautotrophicus (strain ATCC 29096 / DSM 1053 / JCM 10044 / NBRC 100330 / Delta H) (Methanobacterium thermoautotrophicum).